The chain runs to 229 residues: Orotidine 5'-phosphate decarboxylase (229 aa).

Residues Asp-10, Lys-32, 59–68, Thr-119, Arg-180, Gln-189, Gly-209, and Arg-210 each bind substrate; that span reads DLKFHDIPNT. Lys-61 functions as the Proton donor in the catalytic mechanism.

Belongs to the OMP decarboxylase family. Type 1 subfamily. Homodimer.

The enzyme catalyses orotidine 5'-phosphate + H(+) = UMP + CO2. The protein operates within pyrimidine metabolism; UMP biosynthesis via de novo pathway; UMP from orotate: step 2/2. In terms of biological role, catalyzes the decarboxylation of orotidine 5'-monophosphate (OMP) to uridine 5'-monophosphate (UMP). This is Orotidine 5'-phosphate decarboxylase from Legionella pneumophila (strain Paris).